The sequence spans 492 residues: Pre-mRNA-processing factor 19 (492 aa).

In terms of domain architecture, U-box spans 1 to 72 (MSFVCGISGE…APRNVSGTSI (72 aa)). WD repeat units lie at residues 207-246 (HSTGTPGITALDIKGNLSLTGGIDKTVVLYDYEKEQVMQT), 249-288 (GHNKKINAVVLHPDNITAISASADSHIRVWSATDSSSKAI), 291-330 (VHQAPVTDISLNASGDYILSASDDSYWAFSDIRSGKSLCK), 336-375 (GSQIAVHSIEFHPDGLIFGTGAADAVVKIWDLKNQTVAAA), 378-417 (GHTAAVRSIAFSENGYYLATGSEDGEVKLWDLRKLKNLKT), and 461-491 (DHSGPVTGVRFGENARSLVTCSLDKSLRVFS).

Belongs to the WD repeat PRP19 family. In terms of assembly, homotetramer. Component of the NTC complex (or PRP19-associated complex) which is associated with the spliceosome.

It is found in the nucleus. Its subcellular location is the nucleoplasm. It catalyses the reaction S-ubiquitinyl-[E2 ubiquitin-conjugating enzyme]-L-cysteine + [acceptor protein]-L-lysine = [E2 ubiquitin-conjugating enzyme]-L-cysteine + N(6)-ubiquitinyl-[acceptor protein]-L-lysine.. It participates in protein modification; protein ubiquitination. Probable ubiquitin-protein ligase which is mainly involved pre-mRNA splicing and DNA repair. Core component of the NTC/Nineteen complex which is part of the spliceosome and participates in its assembly, its remodeling and is required for its activity. Together with emb-4, necessary for interaction of rnp-4, a probable exon junction complex component, with mRNAs and spliceosomal snRNAs. Plays a role in nuclear retention of unspliced mRNAs. The polypeptide is Pre-mRNA-processing factor 19 (prp-19) (Caenorhabditis elegans).